The chain runs to 316 residues: Secondary metabolism regulator laeA (316 aa).

The protein belongs to the methyltransferase superfamily. LaeA methyltransferase family. Component of the heterotrimeric velvet complex composed of laeA, veA and velB; VeA acting as a bridging protein between laeA and velB.

It localises to the nucleus. It catalyses the reaction L-methionyl-[protein] + S-adenosyl-L-methionine = S-methyl-L-methionyl-[protein] + S-adenosyl-L-homocysteine. Functionally, methyltransferase that performs automethylation. No other methyl-accepting substrate has been identified yet. Component of the velvet transcription factor complex that acts as a global regulator for secondary metabolite gene expression. Controls the biosynthetic gene cluster for beauvericin, a depsipeptide mycotoxin that functions as a virulence determinant. The velvet complex also regulates chromatin structure and transcription of siderophore biosynthetic genes and is required for infection of tomato plants. The velvet complex also governs expression of nitrate metabolism genes. The protein is Secondary metabolism regulator laeA of Fusarium oxysporum f. sp. lycopersici (strain 4287 / CBS 123668 / FGSC 9935 / NRRL 34936) (Fusarium vascular wilt of tomato).